Reading from the N-terminus, the 114-residue chain is Mobility group protein 1A (114 aa).

Residues 5-71 (PKRPLSAYML…EYEKAMKEFE (67 aa)) constitute a DNA-binding region (HMG box). The segment at 69-114 (EFERNGGDKSSGASTKKRGKAAEKKKPAKKSKKKDSEDDEEEDESD) is disordered. Acidic residues predominate over residues 105-114 (EDDEEEDESD).

The protein belongs to the HMGB family.

The protein localises to the nucleus. It localises to the chromosome. Its function is as follows. Found in condensed chromomeres. Binds preferentially to AT-rich DNA. This Chironomus tentans (Midge) protein is Mobility group protein 1A (HMG1A).